The primary structure comprises 261 residues: Yop proteins translocation protein T (261 aa).

7 consecutive transmembrane segments (helical) span residues 20–40 (FMACFVILPVLSKQLLGGVLL), 44–64 (IVCSLALYVYPAVANQPYIEV), 77–97 (IILGLLIGFVATIPFWALESA), 131–151 (TLITIFFSGGAFLSLLSALFH), 180–200 (ILLIAAVLAAPLLIAMFLAEF), 214–234 (VFVLAMPIKSAIASLLLVIYC), and 239–259 (SHASKAMLLVMDPISLLIPVL).

It belongs to the FliR/MopE/SpaR family.

It localises to the cell membrane. Component of the yop secretion machinery. The chain is Yop proteins translocation protein T (yscT) from Yersinia pestis.